We begin with the raw amino-acid sequence, 176 residues long: RNA pyrophosphohydrolase (176 aa).

One can recognise a Nudix hydrolase domain in the interval 6–149 (GYRPNVGIVI…KRDVYRRVMK (144 aa)). Residues 38 to 59 (GGINPGESAEQAMYRELFEEVG) carry the Nudix box motif.

It belongs to the Nudix hydrolase family. RppH subfamily. A divalent metal cation serves as cofactor.

In terms of biological role, accelerates the degradation of transcripts by removing pyrophosphate from the 5'-end of triphosphorylated RNA, leading to a more labile monophosphorylated state that can stimulate subsequent ribonuclease cleavage. The protein is RNA pyrophosphohydrolase of Salmonella arizonae (strain ATCC BAA-731 / CDC346-86 / RSK2980).